Reading from the N-terminus, the 217-residue chain is Imidazole glycerol phosphate synthase subunit HisH (217 aa).

The Glutamine amidotransferase type-1 domain maps to 3–217; it reads SVAVIDYGMG…FLRWEPWSSR (215 aa). The Nucleophile role is filled by Cys82. Residues His193 and Glu195 contribute to the active site.

In terms of assembly, heterodimer of HisH and HisF.

It localises to the cytoplasm. It carries out the reaction 5-[(5-phospho-1-deoxy-D-ribulos-1-ylimino)methylamino]-1-(5-phospho-beta-D-ribosyl)imidazole-4-carboxamide + L-glutamine = D-erythro-1-(imidazol-4-yl)glycerol 3-phosphate + 5-amino-1-(5-phospho-beta-D-ribosyl)imidazole-4-carboxamide + L-glutamate + H(+). The enzyme catalyses L-glutamine + H2O = L-glutamate + NH4(+). It participates in amino-acid biosynthesis; L-histidine biosynthesis; L-histidine from 5-phospho-alpha-D-ribose 1-diphosphate: step 5/9. In terms of biological role, IGPS catalyzes the conversion of PRFAR and glutamine to IGP, AICAR and glutamate. The HisH subunit catalyzes the hydrolysis of glutamine to glutamate and ammonia as part of the synthesis of IGP and AICAR. The resulting ammonia molecule is channeled to the active site of HisF. The protein is Imidazole glycerol phosphate synthase subunit HisH of Methylococcus capsulatus (strain ATCC 33009 / NCIMB 11132 / Bath).